The chain runs to 221 residues: Alpha-ketoglutarate-dependent dioxygenase alkB homolog 7, mitochondrial (221 aa).

Residues 1–23 constitute a mitochondrion transit peptide; the sequence is MAGGGQVVLRTLSQQGWVRGSGA. Residues His121 and Asp123 each contribute to the Fe cation site. A 2-oxoglutarate-binding site is contributed by Tyr165. His177 contributes to the Fe cation binding site. 2-oxoglutarate is bound by residues 197–199 and Arg203; that span reads RIS.

Belongs to the alkB family. Requires Fe(2+) as cofactor.

It is found in the mitochondrion matrix. May function as protein hydroxylase; can catalyze auto-hydroxylation at Leu-110 (in vitro), but this activity may be due to the absence of the true substrate. Required to induce programmed necrosis in response to DNA damage caused by cytotoxic alkylating agents. Acts by triggering the collapse of mitochondrial membrane potential and loss of mitochondrial function that leads to energy depletion and cell death. ALKBH7-mediated necrosis is probably required to prevent the accumulation of cells with DNA damage. Does not display DNA demethylase activity. Involved in fatty acid metabolism. The sequence is that of Alpha-ketoglutarate-dependent dioxygenase alkB homolog 7, mitochondrial (ALKBH7) from Bos taurus (Bovine).